A 540-amino-acid chain; its full sequence is Patellin-4 (540 aa).

Ser-53 is subject to Phosphoserine. Residues 61 to 183 (FADLKESEKK…EKKTEDVVTE (123 aa)) are a coiled coil. The segment at 89-140 (LKTKKKESSPMKEKKEEVVKPEAEVEKKKEEAAEEKVEEEKKSEAVVTEEAP) is disordered. Residues 94–140 (KESSPMKEKKEEVVKPEAEVEKKKEEAAEEKVEEEKKSEAVVTEEAP) are compositionally biased toward basic and acidic residues. A Glycyl lysine isopeptide (Lys-Gly) (interchain with G-Cter in ubiquitin) cross-link involves residue Lys-249. The CRAL-TRIO domain maps to 258-428 (GEEFGEDLAT…QYGGFKTVDD (171 aa)). In terms of domain architecture, GOLD spans 433-534 (NETVSEVVVK…KKKVLYRYRT (102 aa)).

Belongs to the patellin family.

The protein resides in the membrane. It localises to the cytoplasm. Functionally, carrier protein that may be involved in membrane-trafficking events associated with cell plate formation during cytokinesis. Binds to some hydrophobic molecules such as phosphoinositides and promotes their transfer between the different cellular sites. The polypeptide is Patellin-4 (PATL4) (Arabidopsis thaliana (Mouse-ear cress)).